The following is a 540-amino-acid chain: Protein GDAP2 homolog (540 aa).

The 180-residue stretch at 56-235 folds into the Macro domain; sequence RSPFPLCKDV…TYEVLAPLYF (180 aa). The region spanning 371-528 is the CRAL-TRIO domain; sequence QVEDLTEVSG…YITEYDMATN (158 aa).

It belongs to the GDAP2 family.

This is Protein GDAP2 homolog from Drosophila melanogaster (Fruit fly).